Here is a 405-residue protein sequence, read N- to C-terminus: Imidazolonepropionase (405 aa).

Fe(3+)-binding residues include His-72 and His-74. Residues His-72 and His-74 each coordinate Zn(2+). 4-imidazolone-5-propanoate contacts are provided by Arg-81, Tyr-144, and His-177. Residue Tyr-144 coordinates N-formimidoyl-L-glutamate. A Fe(3+)-binding site is contributed by His-242. Residue His-242 coordinates Zn(2+). Gln-245 contacts 4-imidazolone-5-propanoate. Residue Asp-317 coordinates Fe(3+). Asp-317 contributes to the Zn(2+) binding site. N-formimidoyl-L-glutamate-binding residues include Asn-319 and Gly-321. 4-imidazolone-5-propanoate is bound at residue Thr-322.

The protein belongs to the metallo-dependent hydrolases superfamily. HutI family. Zn(2+) is required as a cofactor. Fe(3+) serves as cofactor.

The protein resides in the cytoplasm. It catalyses the reaction 4-imidazolone-5-propanoate + H2O = N-formimidoyl-L-glutamate. It participates in amino-acid degradation; L-histidine degradation into L-glutamate; N-formimidoyl-L-glutamate from L-histidine: step 3/3. Its function is as follows. Catalyzes the hydrolytic cleavage of the carbon-nitrogen bond in imidazolone-5-propanoate to yield N-formimidoyl-L-glutamate. It is the third step in the universal histidine degradation pathway. The chain is Imidazolonepropionase from Klebsiella pneumoniae (strain 342).